The sequence spans 204 residues: Redox-sensing transcriptional repressor Rex 2 (204 aa).

The H-T-H motif DNA-binding region spans 17-53; sequence MYRKVLEATKKPYISSDEIARFLEINPDLVRKDFSYL.

This sequence belongs to the transcriptional regulatory Rex family. As to quaternary structure, homodimer.

It localises to the cytoplasm. Modulates transcription in response to changes in cellular NADH/NAD(+) redox state. The chain is Redox-sensing transcriptional repressor Rex 2 (rex2) from Thermotoga maritima (strain ATCC 43589 / DSM 3109 / JCM 10099 / NBRC 100826 / MSB8).